The primary structure comprises 328 residues: Cytochrome c biogenesis protein CcsA (328 aa).

Helical transmembrane passes span 13 to 33 (ISFSVVSIVLTIYFFTLLVNL), 46 to 66 (GIVITFFGITGLLFTRWIYSG), 73 to 93 (LYESLIFLSWAFSIIHMVSYF), 101 to 121 (LNAITAPSAIFIQGFATSGLL), 146 to 166 (MILGYGALLCGSLLSIALLVI), 234 to 254 (IISLGFIFLTVGILSGAVWAN), 263 to 283 (WDPKETWAFITWTIFAIYLHI), and 295 to 315 (AIVASIGFLLIWICYFGVNLL).

This sequence belongs to the CcmF/CycK/Ccl1/NrfE/CcsA family. May interact with Ccs1.

It localises to the plastid. It is found in the chloroplast thylakoid membrane. Required during biogenesis of c-type cytochromes (cytochrome c6 and cytochrome f) at the step of heme attachment. This is Cytochrome c biogenesis protein CcsA from Barbarea verna (Land cress).